The sequence spans 292 residues: MRTHLPLNALRAFEASARHLNFTKAALELYVTQGAVSQQVRMLEERLGVILFKRLPRGLEMTDDAQILFSVLTTAFSDIERVFKQFERGEYRDVVSIAAVGTFAVGWLLPRLAEFRQLYPRIELNLRTNNNVVNLATEGLDFAIRFGEGLWPLTHNKALFSAPLTVLCSSDTAKPLQHPTDLINETLYRSYREDEWLQWFEKANMSPIKITGSIFDPSRLMIESAIYEGGVALAPAKMFSREIENGQLVQPFKIEVELGKYWLTYLKSKPMTASMEIFQQWLMNEALKEISE.

The HTH lysR-type domain occupies 5–62 (LPLNALRAFEASARHLNFTKAALELYVTQGAVSQQVRMLEERLGVILFKRLPRGLEMT). A DNA-binding region (H-T-H motif) is located at residues 22 to 41 (FTKAALELYVTQGAVSQQVR).

The protein belongs to the LysR transcriptional regulatory family.

Positive regulator of the expression of the gene (blaB) for beta-lactamase. The chain is HTH-type transcriptional regulator BlaA (blaA) from Proteus vulgaris.